A 93-amino-acid chain; its full sequence is Small ribosomal subunit protein bS20c (93 aa).

The protein belongs to the bacterial ribosomal protein bS20 family.

It localises to the plastid. Its subcellular location is the chloroplast. Functionally, binds directly to 16S ribosomal RNA. The polypeptide is Small ribosomal subunit protein bS20c (Trieres chinensis (Marine centric diatom)).